We begin with the raw amino-acid sequence, 126 residues long: Small ribosomal subunit protein bS6 (126 aa).

A disordered region spans residues 101 to 126 (VMMKAKEERTAKREDAAPRAEEAAAE). The segment covering 104–126 (KAKEERTAKREDAAPRAEEAAAE) has biased composition (basic and acidic residues).

It belongs to the bacterial ribosomal protein bS6 family.

In terms of biological role, binds together with bS18 to 16S ribosomal RNA. This chain is Small ribosomal subunit protein bS6, found in Aliivibrio salmonicida (strain LFI1238) (Vibrio salmonicida (strain LFI1238)).